We begin with the raw amino-acid sequence, 258 residues long: Imidazole glycerol phosphate synthase subunit HisF (258 aa).

Catalysis depends on residues Asp-11 and Asp-130.

The protein belongs to the HisA/HisF family. Heterodimer of HisH and HisF.

It localises to the cytoplasm. The catalysed reaction is 5-[(5-phospho-1-deoxy-D-ribulos-1-ylimino)methylamino]-1-(5-phospho-beta-D-ribosyl)imidazole-4-carboxamide + L-glutamine = D-erythro-1-(imidazol-4-yl)glycerol 3-phosphate + 5-amino-1-(5-phospho-beta-D-ribosyl)imidazole-4-carboxamide + L-glutamate + H(+). Its pathway is amino-acid biosynthesis; L-histidine biosynthesis; L-histidine from 5-phospho-alpha-D-ribose 1-diphosphate: step 5/9. IGPS catalyzes the conversion of PRFAR and glutamine to IGP, AICAR and glutamate. The HisF subunit catalyzes the cyclization activity that produces IGP and AICAR from PRFAR using the ammonia provided by the HisH subunit. In Yersinia pseudotuberculosis serotype IB (strain PB1/+), this protein is Imidazole glycerol phosphate synthase subunit HisF.